A 509-amino-acid polypeptide reads, in one-letter code: Aspartyl/glutamyl-tRNA(Asn/Gln) amidotransferase subunit B (509 aa).

It belongs to the GatB/GatE family. GatB subfamily. As to quaternary structure, heterotrimer of A, B and C subunits.

It catalyses the reaction L-glutamyl-tRNA(Gln) + L-glutamine + ATP + H2O = L-glutaminyl-tRNA(Gln) + L-glutamate + ADP + phosphate + H(+). It carries out the reaction L-aspartyl-tRNA(Asn) + L-glutamine + ATP + H2O = L-asparaginyl-tRNA(Asn) + L-glutamate + ADP + phosphate + 2 H(+). In terms of biological role, allows the formation of correctly charged Asn-tRNA(Asn) or Gln-tRNA(Gln) through the transamidation of misacylated Asp-tRNA(Asn) or Glu-tRNA(Gln) in organisms which lack either or both of asparaginyl-tRNA or glutaminyl-tRNA synthetases. The reaction takes place in the presence of glutamine and ATP through an activated phospho-Asp-tRNA(Asn) or phospho-Glu-tRNA(Gln). The protein is Aspartyl/glutamyl-tRNA(Asn/Gln) amidotransferase subunit B of Mycobacterium leprae (strain Br4923).